The following is a 761-amino-acid chain: 3'-5' RNA nuclease TATDN2 (761 aa).

Disordered stretches follow at residues 1–90, 135–181, 197–294, 318–337, 343–364, and 388–486; these read MASE…HFLG, CSLK…LRDQ, KSMP…RRTV, KDREVVMEHPSSGSDWSDVE, RFSQEEPVSLKPSAVPEPSSFT, and SSPK…PKSH. Composition is skewed to low complexity over residues 33-52 and 66-85; these read APSSRPAQRSASRSGGPSSP and SRRLSWGSSRRRNNSSSSFS. Residues 247-294 show a composition bias toward basic and acidic residues; sequence QKEKDATPEVSMEEDKTVPERSSFYDRRVVIDPQEKPSEEPLGDRRTV. Residues 388–402 show a composition bias toward low complexity; it reads SSPKPSSYPSTGSSS. Residues 417–431 show a composition bias toward polar residues; that stretch reads SDYSPNSTGSVQNTS. Residues 452–470 are compositionally biased toward basic and acidic residues; sequence RSSEEREVKEKRTFQEEMP. A divalent metal cation contacts are provided by His-499, His-501, Glu-593, His-630, His-655, and Asp-707.

This sequence belongs to the metallo-dependent hydrolases superfamily. TatD-type hydrolase family. The cofactor is Mg(2+).

The protein localises to the nucleus. Its function is as follows. Mg(2+)-dependent 3'RNA exonuclease and endonuclease that resolves R-loops via specific degradation of R-loop RNA stucture. Shows no activity against D-loop and minimal activity against the RNA strand of an RNA-DNA hybrid duplex oligomer. Has no 3' or 5' exonuclease activity, no uracil glycosylase activity, and no 5' flap endonuclease activity on DNA substrates. May have a role in maintaining genomic stability through its role in R-loop resolution. The polypeptide is 3'-5' RNA nuclease TATDN2 (TATDN2) (Homo sapiens (Human)).